Here is a 406-residue protein sequence, read N- to C-terminus: Tryptophan 2,3-dioxygenase (406 aa).

A Phosphoserine modification is found at serine 19. Substrate is bound by residues 72-76 (FIITH) and arginine 144. Histidine 328 lines the heme pocket. Residue threonine 342 participates in substrate binding.

Belongs to the tryptophan 2,3-dioxygenase family. Homotetramer. Dimer of dimers. Heme serves as cofactor. Liver.

The enzyme catalyses L-tryptophan + O2 = N-formyl-L-kynurenine. It participates in amino-acid degradation; L-tryptophan degradation via kynurenine pathway; L-kynurenine from L-tryptophan: step 1/2. Functionally, heme-dependent dioxygenase that catalyzes the oxidative cleavage of the L-tryptophan (L-Trp) pyrrole ring and converts L-tryptophan to N-formyl-L-kynurenine. Catalyzes the oxidative cleavage of the indole moiety. This is Tryptophan 2,3-dioxygenase from Rattus norvegicus (Rat).